The following is a 209-amino-acid chain: Large ribosomal subunit protein uL3 (209 aa).

Belongs to the universal ribosomal protein uL3 family. Part of the 50S ribosomal subunit. Forms a cluster with proteins L14 and L19.

One of the primary rRNA binding proteins, it binds directly near the 3'-end of the 23S rRNA, where it nucleates assembly of the 50S subunit. This Carboxydothermus hydrogenoformans (strain ATCC BAA-161 / DSM 6008 / Z-2901) protein is Large ribosomal subunit protein uL3.